The following is a 361-amino-acid chain: Phosphoserine aminotransferase (361 aa).

L-glutamate is bound by residues S9 and R42. Residues 76-77, W102, T153, D173, and Q196 contribute to the pyridoxal 5'-phosphate site; that span reads AR. At K197 the chain carries N6-(pyridoxal phosphate)lysine. 238 to 239 is a pyridoxal 5'-phosphate binding site; it reads NT.

Belongs to the class-V pyridoxal-phosphate-dependent aminotransferase family. SerC subfamily. In terms of assembly, homodimer. It depends on pyridoxal 5'-phosphate as a cofactor.

The protein resides in the cytoplasm. The enzyme catalyses O-phospho-L-serine + 2-oxoglutarate = 3-phosphooxypyruvate + L-glutamate. The catalysed reaction is 4-(phosphooxy)-L-threonine + 2-oxoglutarate = (R)-3-hydroxy-2-oxo-4-phosphooxybutanoate + L-glutamate. It participates in amino-acid biosynthesis; L-serine biosynthesis; L-serine from 3-phospho-D-glycerate: step 2/3. Its pathway is cofactor biosynthesis; pyridoxine 5'-phosphate biosynthesis; pyridoxine 5'-phosphate from D-erythrose 4-phosphate: step 3/5. Functionally, catalyzes the reversible conversion of 3-phosphohydroxypyruvate to phosphoserine and of 3-hydroxy-2-oxo-4-phosphonooxybutanoate to phosphohydroxythreonine. This Serratia proteamaculans (strain 568) protein is Phosphoserine aminotransferase.